Consider the following 461-residue polypeptide: Squalene synthase BSS (461 aa).

NADP(+)-binding residues include R51 and R76. D79, E82, and D83 together coordinate Mg(2+). NADP(+)-binding residues include R219, K322, and R324. Residues 430-450 (VTQHWWSILIFLISIAVFFIP) form a helical membrane-spanning segment.

It belongs to the phytoene/squalene synthase family. Mg(2+) is required as a cofactor.

It is found in the endoplasmic reticulum membrane. The catalysed reaction is 2 (2E,6E)-farnesyl diphosphate + NADPH + H(+) = squalene + 2 diphosphate + NADP(+). The enzyme catalyses 2 (2E,6E)-farnesyl diphosphate + NADH + H(+) = squalene + 2 diphosphate + NAD(+). Converts farnesyl diphosphate (FPP) into squalene, a precursor for sterol biosynthesis in eukaryotes. Does not possess botryococcene synthase activity. This Botryococcus braunii (Green alga) protein is Squalene synthase BSS.